We begin with the raw amino-acid sequence, 574 residues long: Tyrosinase (574 aa).

Residues H67, H95, H104, H275, H279, and H304 each contribute to the Cu cation site. The 2'-(S-cysteinyl)-histidine (Cys-His) cross-link spans 93–95 (CTH).

This sequence belongs to the tyrosinase family. Requires Cu(2+) as cofactor.

The catalysed reaction is 2 L-dopa + O2 = 2 L-dopaquinone + 2 H2O. The enzyme catalyses L-tyrosine + O2 = L-dopaquinone + H2O. Functionally, this is a copper-containing oxidase that functions in the formation of pigments such as melanins and other polyphenolic compounds. The protein is Tyrosinase (TYR) of Podospora anserina (Pleurage anserina).